The sequence spans 164 residues: Phosphopantetheine adenylyltransferase (164 aa).

Thr-10 contributes to the substrate binding site. ATP contacts are provided by residues 10–11 (TF) and His-18. 3 residues coordinate substrate: Lys-44, Leu-76, and Arg-90. Residues 91–93 (GLR), Glu-101, and 126–132 (YAFISSS) each bind ATP.

It belongs to the bacterial CoaD family. As to quaternary structure, homohexamer. Requires Mg(2+) as cofactor.

It is found in the cytoplasm. It catalyses the reaction (R)-4'-phosphopantetheine + ATP + H(+) = 3'-dephospho-CoA + diphosphate. Its pathway is cofactor biosynthesis; coenzyme A biosynthesis; CoA from (R)-pantothenate: step 4/5. Its function is as follows. Reversibly transfers an adenylyl group from ATP to 4'-phosphopantetheine, yielding dephospho-CoA (dPCoA) and pyrophosphate. In Halorhodospira halophila (strain DSM 244 / SL1) (Ectothiorhodospira halophila (strain DSM 244 / SL1)), this protein is Phosphopantetheine adenylyltransferase.